We begin with the raw amino-acid sequence, 99 residues long: DNA/RNA-binding protein Alba 1 (99 aa).

Lysine 17 is subject to N6-acetyllysine.

The protein belongs to the histone-like Alba family. In terms of processing, acetylated. Acetylation at Lys-17 decreases DNA-binding affinity.

It is found in the cytoplasm. Its subcellular location is the chromosome. Its function is as follows. Binds double-stranded DNA tightly but without sequence specificity. Involved in DNA compaction. The polypeptide is DNA/RNA-binding protein Alba 1 (Sulfurisphaera tokodaii (strain DSM 16993 / JCM 10545 / NBRC 100140 / 7) (Sulfolobus tokodaii)).